Consider the following 210-residue polypeptide: Uracil phosphoribosyltransferase (210 aa).

Residues Arg78, Arg103, and 130–138 (DPMLATGGT) each bind 5-phospho-alpha-D-ribose 1-diphosphate. Uracil is bound by residues Ile193 and 198-200 (GDA). Asp199 serves as a coordination point for 5-phospho-alpha-D-ribose 1-diphosphate.

Belongs to the UPRTase family. Mg(2+) is required as a cofactor.

The catalysed reaction is UMP + diphosphate = 5-phospho-alpha-D-ribose 1-diphosphate + uracil. The protein operates within pyrimidine metabolism; UMP biosynthesis via salvage pathway; UMP from uracil: step 1/1. Its activity is regulated as follows. Allosterically activated by GTP. Its function is as follows. Catalyzes the conversion of uracil and 5-phospho-alpha-D-ribose 1-diphosphate (PRPP) to UMP and diphosphate. This chain is Uracil phosphoribosyltransferase, found in Stenotrophomonas maltophilia (strain R551-3).